The following is a 279-amino-acid chain: NAD kinase (279 aa).

The active-site Proton acceptor is the Asp57. NAD(+) is bound by residues 57-58 (DG), 133-134 (NE), Arg159, Asp161, and 172-177 (TAYNKS).

The protein belongs to the NAD kinase family. A divalent metal cation serves as cofactor.

It is found in the cytoplasm. The catalysed reaction is NAD(+) + ATP = ADP + NADP(+) + H(+). Involved in the regulation of the intracellular balance of NAD and NADP, and is a key enzyme in the biosynthesis of NADP. Catalyzes specifically the phosphorylation on 2'-hydroxyl of the adenosine moiety of NAD to yield NADP. This is NAD kinase from Streptococcus pyogenes serotype M12 (strain MGAS2096).